Here is a 357-residue protein sequence, read N- to C-terminus: Histidine biosynthesis bifunctional protein HisB (357 aa).

Residues 1–167 (MNDKILFIDR…IHKYLMQNSH (167 aa)) are histidinol-phosphatase. The Nucleophile role is filled by aspartate 9. Residues aspartate 9 and aspartate 11 each contribute to the Mg(2+) site. Aspartate 11 functions as the Proton donor in the catalytic mechanism. Zn(2+)-binding residues include cysteine 93, histidine 95, cysteine 101, and cysteine 103. A Mg(2+)-binding site is contributed by aspartate 130. The tract at residues 168 to 357 (RVAHIQRITN…QIPSSKGILL (190 aa)) is imidazoleglycerol-phosphate dehydratase.

It in the N-terminal section; belongs to the histidinol-phosphatase family. This sequence in the C-terminal section; belongs to the imidazoleglycerol-phosphate dehydratase family. Requires Mg(2+) as cofactor. Zn(2+) serves as cofactor.

It is found in the cytoplasm. The catalysed reaction is D-erythro-1-(imidazol-4-yl)glycerol 3-phosphate = 3-(imidazol-4-yl)-2-oxopropyl phosphate + H2O. It catalyses the reaction L-histidinol phosphate + H2O = L-histidinol + phosphate. It functions in the pathway amino-acid biosynthesis; L-histidine biosynthesis; L-histidine from 5-phospho-alpha-D-ribose 1-diphosphate: step 6/9. Its pathway is amino-acid biosynthesis; L-histidine biosynthesis; L-histidine from 5-phospho-alpha-D-ribose 1-diphosphate: step 8/9. In Blochmanniella floridana, this protein is Histidine biosynthesis bifunctional protein HisB.